The chain runs to 112 residues: Large ribosomal subunit protein eL31 (112 aa).

The protein belongs to the eukaryotic ribosomal protein eL31 family. As to quaternary structure, component of the large ribosomal subunit. Mature ribosomes consist of a small (40S) and a large (60S) subunit. The 40S subunit contains about 32 different proteins and 1 molecule of RNA (18S). The 60S subunit contains 45 different proteins and 3 molecules of RNA (25S, 5.8S and 5S).

The protein localises to the cytoplasm. In terms of biological role, component of the ribosome, a large ribonucleoprotein complex responsible for the synthesis of proteins in the cell. The small ribosomal subunit (SSU) binds messenger RNAs (mRNAs) and translates the encoded message by selecting cognate aminoacyl-transfer RNA (tRNA) molecules. The large subunit (LSU) contains the ribosomal catalytic site termed the peptidyl transferase center (PTC), which catalyzes the formation of peptide bonds, thereby polymerizing the amino acids delivered by tRNAs into a polypeptide chain. The nascent polypeptides leave the ribosome through a tunnel in the LSU and interact with protein factors that function in enzymatic processing, targeting, and the membrane insertion of nascent chains at the exit of the ribosomal tunnel. In Candida albicans (strain SC5314 / ATCC MYA-2876) (Yeast), this protein is Large ribosomal subunit protein eL31.